We begin with the raw amino-acid sequence, 747 residues long: Putative ankyrin repeat protein FPV222 (747 aa).

14 ANK repeats span residues 38–67 (DNCTMLYTAVEHRYIDIIKLLLDHGADPNI), 103–132 (NYRNTFFVYNENRNLEIAKMLIQNGALVNM), 136–165 (KNITPLHIASSSGSYKMVELLLLHGANTNA), 169–198 (YGETSLHYSVSSNDLNISELLIENGTNVNV), 202–231 (DSITALIIAVEIMSIDLVRLLLDKGADTNA), 234–263 (LERFKLYVTETKQNNNILKYLNTNNVNTNV), 294–323 (PCTVPVTLATRKGSKELLEILLEYGCNPDI), 328–357 (TSTYAMHYAVIRKHYEMLNILIRYDAYTDV), 361–393 (QQNTPAHYAVKLPISESCKYLKLLKLAGASFNL), 397–426 (KGRTPLHTACKYNNTEAVKYLIESGCDTNI), 430–460 (MSFTPLNYAVYYEREDTVKILLESGCVDPNL), 464–493 (KEVSPIIQAIKRNNKNIIKMLLNAGIDIKP), 495–524 (NECYGLHMLAALHNKDLLKWLLCTISELEV), and 529–559 (DHYVPLASYVAELSDIRIMEILIEKGLDLNK).

This is Putative ankyrin repeat protein FPV222 from Vertebrata (FPV).